Consider the following 429-residue polypeptide: Threonine synthase (429 aa).

The residue at position 107 (lysine 107) is an N6-(pyridoxal phosphate)lysine.

Belongs to the threonine synthase family. Requires pyridoxal 5'-phosphate as cofactor.

It catalyses the reaction O-phospho-L-homoserine + H2O = L-threonine + phosphate. Its pathway is amino-acid biosynthesis; L-threonine biosynthesis; L-threonine from L-aspartate: step 5/5. Its function is as follows. Catalyzes the gamma-elimination of phosphate from L-phosphohomoserine and the beta-addition of water to produce L-threonine. This chain is Threonine synthase (thrC), found in Serratia marcescens.